A 157-amino-acid polypeptide reads, in one-letter code: Ubiquitin-like protein 4A (157 aa).

One can recognise a Ubiquitin-like domain in the interval 1-76; that stretch reads MQLTVKALQG…LNLVVKPLEK (76 aa). K48 is covalently cross-linked (Glycyl lysine isopeptide (Lys-Gly) (interchain with G-Cter in ubiquitin)). Position 90 is a phosphoserine (S90). A required and sufficient for interaction with BAG6 region spans residues 96–138; it reads WQLISKVLARHFSVADASRVLEQLQRDYDRSLSRLTLDDIERL.

In terms of assembly, component of the BAG6/BAT3 complex, at least composed of BAG6, UBL4A and GET4/TRC35. Interacts with BAG6; the interaction is direct and required for UBL4A protein stability. Interacts with USP13; may be indirect via BAG6. In terms of processing, polyubiquitinated. Ubiquitination by AMFR and deubiquitination by USP13 may regulate the interaction between the BAG6/BAT3 complex and SGTA and therefore may regulate client proteins fate.

It localises to the cytoplasm. It is found in the cytosol. The protein localises to the nucleus. As part of a cytosolic protein quality control complex, the BAG6/BAT3 complex, maintains misfolded and hydrophobic patches-containing proteins in a soluble state and participates in their proper delivery to the endoplasmic reticulum or alternatively can promote their sorting to the proteasome where they undergo degradation. The BAG6/BAT3 complex is involved in the post-translational delivery of tail-anchored/type II transmembrane proteins to the endoplasmic reticulum membrane. Recruited to ribosomes, it interacts with the transmembrane region of newly synthesized tail-anchored proteins and together with SGTA and ASNA1 mediates their delivery to the endoplasmic reticulum. Client proteins that cannot be properly delivered to the endoplasmic reticulum are ubiquitinated and sorted to the proteasome. Similarly, the BAG6/BAT3 complex also functions as a sorting platform for proteins of the secretory pathway that are mislocalized to the cytosol either delivering them to the proteasome for degradation or to the endoplasmic reticulum. The BAG6/BAT3 complex also plays a role in the endoplasmic reticulum-associated degradation (ERAD), a quality control mechanism that eliminates unwanted proteins of the endoplasmic reticulum through their retrotranslocation to the cytosol and their targeting to the proteasome. It maintains these retrotranslocated proteins in an unfolded yet soluble state condition in the cytosol to ensure their proper delivery to the proteasome. The chain is Ubiquitin-like protein 4A from Mus musculus (Mouse).